The chain runs to 95 residues: Aspartyl/glutamyl-tRNA(Asn/Gln) amidotransferase subunit C (95 aa).

It belongs to the GatC family. In terms of assembly, heterotrimer of A, B and C subunits.

It catalyses the reaction L-glutamyl-tRNA(Gln) + L-glutamine + ATP + H2O = L-glutaminyl-tRNA(Gln) + L-glutamate + ADP + phosphate + H(+). It carries out the reaction L-aspartyl-tRNA(Asn) + L-glutamine + ATP + H2O = L-asparaginyl-tRNA(Asn) + L-glutamate + ADP + phosphate + 2 H(+). In terms of biological role, allows the formation of correctly charged Asn-tRNA(Asn) or Gln-tRNA(Gln) through the transamidation of misacylated Asp-tRNA(Asn) or Glu-tRNA(Gln) in organisms which lack either or both of asparaginyl-tRNA or glutaminyl-tRNA synthetases. The reaction takes place in the presence of glutamine and ATP through an activated phospho-Asp-tRNA(Asn) or phospho-Glu-tRNA(Gln). The chain is Aspartyl/glutamyl-tRNA(Asn/Gln) amidotransferase subunit C from Acetivibrio thermocellus (strain ATCC 27405 / DSM 1237 / JCM 9322 / NBRC 103400 / NCIMB 10682 / NRRL B-4536 / VPI 7372) (Clostridium thermocellum).